Reading from the N-terminus, the 143-residue chain is Ribosome-binding factor A (143 aa).

Basic and acidic residues predominate over residues 119 to 129 (AVGDKPAVPRD). The disordered stretch occupies residues 119–143 (AVGDKPAVPRDDNDDPVSDNPERDA).

This sequence belongs to the RbfA family. In terms of assembly, monomer. Binds 30S ribosomal subunits, but not 50S ribosomal subunits or 70S ribosomes.

It is found in the cytoplasm. In terms of biological role, one of several proteins that assist in the late maturation steps of the functional core of the 30S ribosomal subunit. Associates with free 30S ribosomal subunits (but not with 30S subunits that are part of 70S ribosomes or polysomes). Required for efficient processing of 16S rRNA. May interact with the 5'-terminal helix region of 16S rRNA. This Marinobacter nauticus (strain ATCC 700491 / DSM 11845 / VT8) (Marinobacter aquaeolei) protein is Ribosome-binding factor A.